Consider the following 521-residue polypeptide: tRNA (adenine(58)-N(1))-methyltransferase non-catalytic subunit trm6 (521 aa).

Disordered stretches follow at residues 1 to 24 (METE…NNNN), 305 to 336 (IYDK…AKTI), and 452 to 521 (QKST…KIDE). Residues 12-24 (KSTTSNTNDNNNN) show a composition bias toward low complexity. Over residues 308-334 (KQVKEKEKEKEKDENVKDEKESGEEAK) the composition is skewed to basic and acidic residues. Low complexity-rich tracts occupy residues 452-476 (QKST…TKTT) and 487-502 (DATT…AATT). The span at 510–521 (SESALKKRKIDE) shows a compositional bias: basic and acidic residues.

The protein belongs to the TRM6/GCD10 family. Heterotetramer; composed of two copies of trmt6 and two copies of trmt61a.

It is found in the nucleus. Functionally, substrate-binding subunit of tRNA (adenine-N(1)-)-methyltransferase, which catalyzes the formation of N(1)-methyladenine at position 58 (m1A58) in initiator methionyl-tRNA. The chain is tRNA (adenine(58)-N(1))-methyltransferase non-catalytic subunit trm6 (trmt6) from Dictyostelium discoideum (Social amoeba).